We begin with the raw amino-acid sequence, 368 residues long: Cell division protein FtsZ 1 (368 aa).

Residues 52-56 (GGGCN), 139-141 (GTG), E170, R174, and D217 contribute to the GTP site.

The protein belongs to the FtsZ family. Homodimer. Polymerizes to form a dynamic ring structure in a strictly GTP-dependent manner. Interacts directly with several other division proteins.

It localises to the cytoplasm. Its function is as follows. Essential cell division protein that forms a contractile ring structure (Z ring) at the future cell division site. The regulation of the ring assembly controls the timing and the location of cell division. One of the functions of the FtsZ ring is to recruit other cell division proteins to the septum to produce a new cell wall between the dividing cells. Binds GTP and shows GTPase activity. This is Cell division protein FtsZ 1 from Archaeoglobus fulgidus (strain ATCC 49558 / DSM 4304 / JCM 9628 / NBRC 100126 / VC-16).